A 153-amino-acid chain; its full sequence is UPF0756 membrane protein LSEI_1366 (153 aa).

Transmembrane regions (helical) follow at residues 4–24 (WLFL…SLII), 52–72 (WGVT…EIGF), 85–105 (WIAI…VGLL), and 115–135 (LVFG…GPVI).

It belongs to the UPF0756 family.

The protein localises to the cell membrane. This is UPF0756 membrane protein LSEI_1366 from Lacticaseibacillus paracasei (strain ATCC 334 / BCRC 17002 / CCUG 31169 / CIP 107868 / KCTC 3260 / NRRL B-441) (Lactobacillus paracasei).